The following is a 541-amino-acid chain: Calcium/calmodulin-dependent protein kinase kinase (541 aa).

Positions 83 to 106 are disordered; sequence AVQEDDEAGPHSSNNLAATMSPNL. Over residues 93 to 106 the composition is skewed to polar residues; it reads HSSNNLAATMSPNL. A Protein kinase domain is found at 130-411; it reads YRLMEEIGQG…LHEVKVHTWV (282 aa). ATP contacts are provided by residues 136-144 and K159; that span reads IGQGSYGIV. Residues 169 to 190 form an RP domain region; it reads NFACFRQPPPRRNKENAAPSVL. D276 functions as the Proton acceptor in the catalytic mechanism. The interval 437–442 is autoinhibitory domain; sequence ENCVRV. The segment at 440 to 465 is calmodulin-binding; that stretch reads VRVIPRLDTLILVKAMGHRKRFGNPF. Residues 462–512 form a disordered region; sequence GNPFRNKLSAQSSIRDRRKSSSVKDPTYVPPPNSPPATSNNNLNSTKVDRP. Residues 497–507 show a composition bias toward low complexity; it reads PATSNNNLNST.

The protein belongs to the protein kinase superfamily. Ser/Thr protein kinase family. It depends on Mg(2+) as a cofactor. Expressed in head and tail neurons and vulval muscles.

The protein localises to the cytoplasm. It catalyses the reaction L-seryl-[protein] + ATP = O-phospho-L-seryl-[protein] + ADP + H(+). It carries out the reaction L-threonyl-[protein] + ATP = O-phospho-L-threonyl-[protein] + ADP + H(+). Its activity is regulated as follows. Activated by Ca(2+)/calmodulin. Binding of calmodulin may relieve intrasteric autoinhibition. In terms of biological role, calcium/calmodulin-dependent protein kinase which phosphorylates cmk-1. Component of a calcium-triggered signaling cascade involved in CRE-mediated transcriptional activation, probably through cmk-1-mediated crh-1/CREB phosphorylation. Plays a role in salt-avoidance learning behavior via the phosphorylation of cmk-1. The sequence is that of Calcium/calmodulin-dependent protein kinase kinase from Caenorhabditis elegans.